Reading from the N-terminus, the 23-residue chain is Hemocyanin subunit 1 (23 aa).

The interval 1–23 is disordered; it reads DSPGGASDTQKQHXVNSXXXKXY.

It belongs to the tyrosinase family. Hemocyanin subfamily. As to expression, hemolymph.

The protein resides in the secreted. It is found in the extracellular space. Its function is as follows. Hemocyanins are copper-containing oxygen carriers occurring freely dissolved in the hemolymph of many mollusks and arthropods. This is Hemocyanin subunit 1 from Cancer pagurus (Rock crab).